A 222-amino-acid chain; its full sequence is Putative N-acetylmannosamine-6-phosphate 2-epimerase (222 aa).

This sequence belongs to the NanE family.

The catalysed reaction is an N-acyl-D-glucosamine 6-phosphate = an N-acyl-D-mannosamine 6-phosphate. Its pathway is amino-sugar metabolism; N-acetylneuraminate degradation; D-fructose 6-phosphate from N-acetylneuraminate: step 3/5. In terms of biological role, converts N-acetylmannosamine-6-phosphate (ManNAc-6-P) to N-acetylglucosamine-6-phosphate (GlcNAc-6-P). The chain is Putative N-acetylmannosamine-6-phosphate 2-epimerase from Staphylococcus aureus (strain bovine RF122 / ET3-1).